We begin with the raw amino-acid sequence, 87 residues long: Exodeoxyribonuclease 7 small subunit (87 aa).

Belongs to the XseB family. As to quaternary structure, heterooligomer composed of large and small subunits.

It is found in the cytoplasm. The enzyme catalyses Exonucleolytic cleavage in either 5'- to 3'- or 3'- to 5'-direction to yield nucleoside 5'-phosphates.. In terms of biological role, bidirectionally degrades single-stranded DNA into large acid-insoluble oligonucleotides, which are then degraded further into small acid-soluble oligonucleotides. The polypeptide is Exodeoxyribonuclease 7 small subunit (Halorhodospira halophila (strain DSM 244 / SL1) (Ectothiorhodospira halophila (strain DSM 244 / SL1))).